Here is a 443-residue protein sequence, read N- to C-terminus: Endothelin receptor type B (443 aa).

Positions 1-26 (MQPLRSLCGRALVALIFACGVAGVQS) are cleaved as a signal peptide. Residues 27–102 (EERGFPPAGA…GPIEIKDTFK (76 aa)) lie on the Extracellular side of the membrane. The segment at 53–89 (TFWPRGSNASLPRSSSPPQMPKGGRMAGPPARTLTPP) is disordered. A compositionally biased stretch (polar residues) spans 59-69 (SNASLPRSSSP). Residue Asn-60 is glycosylated (N-linked (GlcNAc...) asparagine). The chain crosses the membrane as a helical span at residues 103–127 (YINTVVSCLVFVLGIIGNSTLLRII). Over 128 to 138 (YKNKCMRNGPN) the chain is Cytoplasmic. The chain crosses the membrane as a helical span at residues 139-164 (ILIASLALGDLLHIIIDIPINVYKLL). Over 165-176 (AEDWPFGVEMCK) the chain is Extracellular. Cys-175 and Cys-256 are disulfide-bonded. Residues 177 to 198 (LVPFIQKASVGITVLSLCALSI) traverse the membrane as a helical segment. The Cytoplasmic segment spans residues 199 to 219 (DRYRAVASWSRIKGIGVPKWT). Residues 220-244 (AVEIVLIWVVSVVLAVPEALGFDMI) form a helical membrane-spanning segment. At 245 to 272 (TTDYKGNRLRICLLHPTQKTAFMQFYKT) the chain is on the extracellular side. The helical transmembrane segment at 273 to 297 (AKDWWLFSFYFCLPLAITAFFYTLM) threads the bilayer. The Cytoplasmic segment spans residues 298–325 (TCEMLRKKSGMQIALNDHLKQRREVAKT). Ser-306 bears the Phosphoserine mark. Residues 326–351 (VFCLVLVFALCWLPLHLSRILKLTLY) traverse the membrane as a helical segment. The Extracellular portion of the chain corresponds to 352 to 363 (DQNDSNRCELLS). The N-linked (GlcNAc...) asparagine glycan is linked to Asn-354. A helical membrane pass occupies residues 364–390 (FLLVLDYIGINMASLNSCINPIALYLV). At 391 to 443 (SKRFKNCFKSCLCCWCQSFEEKQSLEEKQSCLKFKANDHGYDNFRSSNKYSSS) the chain is on the cytoplasmic side. Residues Cys-403, Cys-404, and Cys-406 are each lipidated (S-palmitoyl cysteine). Phosphoserine is present on Ser-420. Tyr-440 bears the Phosphotyrosine mark. Ser-441, Ser-442, and Ser-443 each carry phosphoserine.

This sequence belongs to the G-protein coupled receptor 1 family. Endothelin receptor subfamily. EDNRB sub-subfamily.

It is found in the cell membrane. Non-specific receptor for endothelin 1, 2, and 3. Mediates its action by association with G proteins that activate a phosphatidylinositol-calcium second messenger system. This Sus scrofa (Pig) protein is Endothelin receptor type B (EDNRB).